Consider the following 260-residue polypeptide: HTH-type transcriptional repressor NanR (260 aa).

The HTH gntR-type domain maps to 27–95 (KKLSEMVEEE…NGERARVSRP (69 aa)). The segment at residues 55–74 (ERELMAFFNVGRPSVREALA) is a DNA-binding region (H-T-H motif).

This sequence belongs to the NanR family.

Transcriptional repressor that controls expression of the genes required for the catabolism of sialic acids. This chain is HTH-type transcriptional repressor NanR, found in Citrobacter rodentium (strain ICC168) (Citrobacter freundii biotype 4280).